The chain runs to 522 residues: Tyrosine-protein phosphatase 1 (522 aa).

Residues 32-63 (RSNSSISLSSSSHSSFSRMGSLGSLPTNSGSS) form a disordered region. Positions 33–63 (SNSSISLSSSSHSSFSRMGSLGSLPTNSGSS) are enriched in low complexity. Residues 97-471 (IKEEFRLLEE…LFCYKTILDE (375 aa)) enclose the Tyrosine-protein phosphatase domain. Cys-310 (phosphocysteine intermediate) is an active-site residue. The interval 327–426 (MKKLDHYFKQ…DDAAESDLKY (100 aa)) is PTPase insert (Asn-rich). Positions 382–410 (NNNNNNNLNNNNNINNNSNGSNNTPQTEP) are enriched in low complexity. Residues 382 to 420 (NNNNNNNLNNNNNINNNSNGSNNTPQTEPNNEEDDDDAA) are disordered. Acidic residues predominate over residues 411 to 420 (NNEEDDDDAA).

Belongs to the protein-tyrosine phosphatase family. Non-receptor class subfamily. As to expression, expressed predominantly in anterior-like cells and to a lesser degree in prestalk cells.

It localises to the cytoplasm. Its subcellular location is the cell membrane. The catalysed reaction is O-phospho-L-tyrosyl-[protein] + H2O = L-tyrosyl-[protein] + phosphate. Functionally, may have a role in growth and in the early stages of development. Affects the timing of development. The protein is Tyrosine-protein phosphatase 1 (ptpA1-1) of Dictyostelium discoideum (Social amoeba).